The following is a 691-amino-acid chain: MEESSLSRAPSRGGVNFLNVARTYIPNTKVECHYTLPPGTMPSASDWIGIFKVEAACVRDYHTFVWSSVPESTTDGSPTHASVQFQASYLPKPGAQLYQFRYVNRQGRVCGQSPPFQFREPRPMDELVTLEEADGGSDILLVVPKATVLQNQLDESQQERNDLMQLKLQLEDQVTELRSRVQELEAALATARQEHSELTEQYKGLSRSHGELSEERDILSQQQGDHVARILELEDDIQTMSDKVLMKEVELDRVRDTVKALTREQEKLLRQLKEFQADKEQSEAELQTVREENCCLNTELEEAKSRQEEQGAQVQRLKDKLAHMKDTLGQAQQKVAELEPLKEQLRGVQELAASSQQKAALLGEELASAAGARDRTIAELHRSRLEVAEVNGRLAELSLHMKEEKCQWSKERTGLLQSMEAEKDKILKLSAEILRLEKTVQEERTQSHVFKTELAREKDSSLVQLSESKRELTELRSALRVLQKEKEQLQTEKQELLEYMRKLEARLEKVADEKWTEDAATEDEEATAGLSCPASLTDSEDESPEDMRLPSYGLCESGNTSSSPPGPREPSSLVVINQPAPIAPQFSGPGEASSSDSEAEDEKSVLMAAVQSGGEEASLLLPELGSAFYDVASAFTVSSLSEASPGVPANPPWKECPICKERFPAESDKDALEGHMDGHFFFSTQDPFTFE.

A p300 KIX-binding region spans residues 1-30 (MEESSLSRAPSRGGVNFLNVARTYIPNTKV). The N-terminal AD (CTNNB1 binding site) stretch occupies residues 1 to 190 (MEESSLSRAP…VQELEAALAT (190 aa)). The residue at position 4 (serine 4) is a Phosphoserine. Residues 45–125 (SDWIGIFKVE…FQFREPRPMD (81 aa)) are interaction with GATA1. Coiled-coil stretches lie at residues 145–205 (KATV…YKGL), 232–339 (ELED…AELE), and 417–514 (QSME…ADEK). Positions 501 to 691 (RKLEARLEKV…FSTQDPFTFE (191 aa)) are C-terminal AD (CTNNB1 binding site); interaction with CCAR1. Residues 512 to 605 (DEKWTEDAAT…DSEAEDEKSV (94 aa)) are disordered. The segment at 653 to 679 (WKECPICKERFPAESDKDALEGHMDGH) adopts a UBZ1-type zinc-finger fold. Zn(2+) contacts are provided by cysteine 656, cysteine 659, histidine 675, and histidine 679.

This sequence belongs to the CALCOCO family. As to quaternary structure, part of a calphoglin complex consisting of CALCOCO1, PPA1 and PGM. Interacts with the bHLH-PAS domains of GRIP1, AHR and ARNT. Interacts with CTNNB1 via both its N- and C-terminal regions. Interacts with EP300. Interacts with CCAR1 (via N-terminus) and GATA1. Expressed in all tissues examined except spleen, with high levels of expression in the heart and kidney.

It localises to the cytoplasm. The protein localises to the nucleus. Its function is as follows. Functions as a coactivator for aryl hydrocarbon and nuclear receptors (NR). Recruited to promoters through its contact with the N-terminal basic helix-loop-helix-Per-Arnt-Sim (PAS) domain of transcription factors or coactivators, such as NCOA2. During ER-activation acts synergistically in combination with other NCOA2-binding proteins, such as EP300, CREBBP and CARM1. Involved in the transcriptional activation of target genes in the Wnt/CTNNB1 pathway. Functions as a secondary coactivator in LEF1-mediated transcriptional activation via its interaction with CTNNB1. Coactivator function for nuclear receptors and LEF1/CTNNB1 involves differential utilization of two different activation regions. In association with CCAR1 enhances GATA1- and MED1-mediated transcriptional activation from the gamma-globin promoter during erythroid differentiation of K562 erythroleukemia cells. The protein is Calcium-binding and coiled-coil domain-containing protein 1 (Calcoco1) of Mus musculus (Mouse).